A 232-amino-acid polypeptide reads, in one-letter code: Transcriptional regulatory protein CpxR (232 aa).

The Response regulatory domain occupies K3–L115. D51 bears the 4-aspartylphosphate mark. A DNA-binding region (ompR/PhoB-type) is located at residues S131–S230.

Phosphorylated by CpxA.

It is found in the cytoplasm. Functionally, member of the two-component regulatory system CpxA/CpxR. This system combats a variety of extracytoplasmic protein-mediated toxicities. It performs this function by increasing the synthesis of the periplasmic protease, DegP as well as that of CpxP protein. This chain is Transcriptional regulatory protein CpxR (cpxR), found in Escherichia coli O157:H7.